The chain runs to 337 residues: MAELAHQQSKRKRELDAEEAEASSTEGEEAGVGNGTSAPVRLPFSGFRVKKVLRESARDKIIFLHGKVNEASGDGDGEDAVVILEKTPFQVDQVAQLLKGSPELQLQFSNDVYSTYHLFPPRQLSDVKTTVVYPATEKHLQKYLRQDLHLVRETGSDYRNVTLPHLESQSLSIQWVYNILDKKAEADRIVFENPDPSDGFVLIPDLKWNQQQLDDLYLIAICHRRGIKSLRDLTAEHLPLLRNILREGQEAILRRYQVAADRLRVYLHYLPSYYHLHVHFTALGFEAPGAGVERAHLLAEVIDNLEQDPEHYQRRTLTFALRADDPLLALLQEAQRS.

The segment at 1 to 37 (MAELAHQQSKRKRELDAEEAEASSTEGEEAGVGNGTS) is disordered. An N-acetylalanine modification is found at A2. The nuclear localization signal (NLS) motif lies at 10–13 (KRKR). Acidic residues predominate over residues 16–29 (DAEEAEASSTEGEE). 2 positions are modified to phosphoserine: S24 and S101. 2 positions are modified to N6-acetyllysine: K138 and K142. The nuclear export sequence (NES) signature appears at 142–154 (KYLRQDLHLVRET). Residues W175, E185, D205, K207, and 268–279 (HYLPSYYHLHVH) each bind substrate. Positions 275–279 (HLHVH) match the Histidine triad motif motif. H277 (nucleophile) is an active-site residue.

Belongs to the HIT family. As to quaternary structure, homodimer. Associates with components of the exosome multienzyme ribonuclease complex, such as EXOSC3 and EXOSC4. Interacts with NDOR1.

The protein localises to the cytoplasm. The protein resides in the nucleus. It catalyses the reaction a 5'-end (N(7)-methyl 5'-triphosphoguanosine)-ribonucleoside in mRNA + H2O = N(7)-methyl-GMP + a 5'-end diphospho-ribonucleoside in mRNA + 2 H(+). Its activity is regulated as follows. The hydrolytic product 7-methylguanosine diphosphate (m7GDP) efficiently inhibits the decapping scavenger activity and acts as a competitive inhibitor in vitro. Inhibited by 2,4-diaminoquinazoline. Decapping scavenger enzyme that catalyzes the cleavage of a residual cap structure following the degradation of mRNAs by 3'-&gt;5' exosome-mediated mRNA decay pathway. Hydrolyzes cap analog structures like 7-methylguanosine nucleoside triphosphate (m7GpppG) with up to 10 nucleotide substrates (small capped oligoribonucleotides) and specifically releases 5'-phosphorylated RNA fragments and 7-methylguanosine monophosphate (m7GMP). Cleaves cap analog structures like tri-methyl guanosine nucleoside triphosphate (m3(2,2,7)GpppG) with very poor efficiency. Does not hydrolyze unmethylated cap analog (GpppG) and shows no decapping activity on intact m7GpppG-capped mRNA molecules longer than 25 nucleotides. Does not hydrolyze 7-methylguanosine diphosphate (m7GDP) to m7GMP. May also play a role in the 5'-&gt;3 mRNA decay pathway; m7GDP, the downstream product released by the 5'-&gt;3' mRNA mediated decapping activity, may be also converted by DCPS to m7GMP. Binds to m7GpppG and strongly to m7GDP. Plays a role in first intron splicing of pre-mRNAs. Inhibits activation-induced cell death. The chain is m7GpppX diphosphatase (DCPS) from Bos taurus (Bovine).